The following is a 477-amino-acid chain: Secreted RxLR effector protein 102 (477 aa).

The first 20 residues, 1–20 (MRGGYYVLTALFVVASSEIA), serve as a signal peptide directing secretion. The RxLR-dEER signature appears at 48–65 (RFLRESRGVHGNVANEER). 4 disordered regions span residues 326–345 (SKGQ…TSKG), 351–370 (IKRS…LPSI), 376–401 (SSKS…KRSR), and 433–455 (PRSA…APSS).

The protein belongs to the RxLR effector family.

Its subcellular location is the secreted. It is found in the host nucleus. In terms of biological role, secreted effector that acts as an elicitor that induces cell death in host plant cells. This is Secreted RxLR effector protein 102 from Plasmopara viticola (Downy mildew of grapevine).